Reading from the N-terminus, the 51-residue chain is ATP synthase F(1) complex subunit epsilon, mitochondrial (51 aa).

Lys-21, Lys-32, and Lys-37 each carry N6-acetyllysine; alternate. Residues Lys-21, Lys-32, and Lys-37 each carry the N6-succinyllysine; alternate modification. Residue Lys-44 is modified to N6-acetyllysine.

The protein belongs to the eukaryotic ATPase epsilon family. As to quaternary structure, component of the ATP synthase complex composed at least of ATP5F1A/subunit alpha, ATP5F1B/subunit beta, ATP5MC1/subunit c (homooctomer), MT-ATP6/subunit a, MT-ATP8/subunit 8, ATP5ME/subunit e, ATP5MF/subunit f, ATP5MG/subunit g, ATP5MK/subunit k, ATP5MJ/subunit j, ATP5F1C/subunit gamma, ATP5F1D/subunit delta, ATP5F1E/subunit epsilon, ATP5PF/subunit F6, ATP5PB/subunit b, ATP5PD/subunit d, ATP5PO/subunit OSCP. ATP synthase complex consists of a soluble F(1) head domain (subunits alpha(3) and beta(3)) - the catalytic core - and a membrane F(0) domain - the membrane proton channel (subunits c, a, 8, e, f, g, k and j). These two domains are linked by a central stalk (subunits gamma, delta, and epsilon) rotating inside the F1 region and a stationary peripheral stalk (subunits F6, b, d, and OSCP). As to expression, ubiquitous.

The protein localises to the mitochondrion. The protein resides in the mitochondrion inner membrane. Functionally, subunit epsilon, of the mitochondrial membrane ATP synthase complex (F(1)F(0) ATP synthase or Complex V) that produces ATP from ADP in the presence of a proton gradient across the membrane which is generated by electron transport complexes of the respiratory chain. ATP synthase complex consist of a soluble F(1) head domain - the catalytic core - and a membrane F(1) domain - the membrane proton channel. These two domains are linked by a central stalk rotating inside the F(1) region and a stationary peripheral stalk. During catalysis, ATP synthesis in the catalytic domain of F(1) is coupled via a rotary mechanism of the central stalk subunits to proton translocation. In vivo, can only synthesize ATP although its ATP hydrolase activity can be activated artificially in vitro. May be essential for the assembly of F(1) and may play an important role in the incorporation of the hydrophobic subunit c into the F(1)-c oligomer rotor of the mitochondrial ATP synthase complex. The polypeptide is ATP synthase F(1) complex subunit epsilon, mitochondrial (Homo sapiens (Human)).